Here is a 325-residue protein sequence, read N- to C-terminus: Phosphatidylserine decarboxylase proenzyme (325 aa).

Catalysis depends on charge relay system; for autoendoproteolytic cleavage activity residues Asp90, His147, and Ser253. Catalysis depends on Ser253, which acts as the Schiff-base intermediate with substrate; via pyruvic acid; for decarboxylase activity. Residue Ser253 is modified to Pyruvic acid (Ser); by autocatalysis. Residues Met281–Ser325 form a disordered region. A compositionally biased stretch (polar residues) spans Lys284 to Asn305.

The protein belongs to the phosphatidylserine decarboxylase family. PSD-B subfamily. Prokaryotic type I sub-subfamily. In terms of assembly, heterodimer of a large membrane-associated beta subunit and a small pyruvoyl-containing alpha subunit. The cofactor is pyruvate. Is synthesized initially as an inactive proenzyme. Formation of the active enzyme involves a self-maturation process in which the active site pyruvoyl group is generated from an internal serine residue via an autocatalytic post-translational modification. Two non-identical subunits are generated from the proenzyme in this reaction, and the pyruvate is formed at the N-terminus of the alpha chain, which is derived from the carboxyl end of the proenzyme. The autoendoproteolytic cleavage occurs by a canonical serine protease mechanism, in which the side chain hydroxyl group of the serine supplies its oxygen atom to form the C-terminus of the beta chain, while the remainder of the serine residue undergoes an oxidative deamination to produce ammonia and the pyruvoyl prosthetic group on the alpha chain. During this reaction, the Ser that is part of the protease active site of the proenzyme becomes the pyruvoyl prosthetic group, which constitutes an essential element of the active site of the mature decarboxylase.

The protein localises to the cell membrane. It catalyses the reaction a 1,2-diacyl-sn-glycero-3-phospho-L-serine + H(+) = a 1,2-diacyl-sn-glycero-3-phosphoethanolamine + CO2. It participates in phospholipid metabolism; phosphatidylethanolamine biosynthesis; phosphatidylethanolamine from CDP-diacylglycerol: step 2/2. In terms of biological role, catalyzes the formation of phosphatidylethanolamine (PtdEtn) from phosphatidylserine (PtdSer). In Alteromonas mediterranea (strain DSM 17117 / CIP 110805 / LMG 28347 / Deep ecotype), this protein is Phosphatidylserine decarboxylase proenzyme.